The following is a 196-amino-acid chain: NADH-quinone oxidoreductase subunit C (196 aa).

Belongs to the complex I 30 kDa subunit family. In terms of assembly, NDH-1 is composed of 14 different subunits. Subunits NuoB, C, D, E, F, and G constitute the peripheral sector of the complex.

It is found in the cell inner membrane. It catalyses the reaction a quinone + NADH + 5 H(+)(in) = a quinol + NAD(+) + 4 H(+)(out). In terms of biological role, NDH-1 shuttles electrons from NADH, via FMN and iron-sulfur (Fe-S) centers, to quinones in the respiratory chain. The immediate electron acceptor for the enzyme in this species is believed to be ubiquinone. Couples the redox reaction to proton translocation (for every two electrons transferred, four hydrogen ions are translocated across the cytoplasmic membrane), and thus conserves the redox energy in a proton gradient. This chain is NADH-quinone oxidoreductase subunit C, found in Rickettsia bellii (strain RML369-C).